Consider the following 109-residue polypeptide: Cell division protein ZapA (109 aa).

Residues 21 to 100 (PDQRDALNQA…EQALLERGRI (80 aa)) adopt a coiled-coil conformation.

The protein belongs to the ZapA family. Type 1 subfamily. In terms of assembly, homodimer. Interacts with FtsZ.

The protein localises to the cytoplasm. In terms of biological role, activator of cell division through the inhibition of FtsZ GTPase activity, therefore promoting FtsZ assembly into bundles of protofilaments necessary for the formation of the division Z ring. It is recruited early at mid-cell but it is not essential for cell division. The protein is Cell division protein ZapA of Shigella dysenteriae serotype 1 (strain Sd197).